The primary structure comprises 56 residues: Pituitary adenylate cyclase-activating polypeptide (56 aa).

The tract at residues V42–L50 is important for receptor binding. At L50 the chain carries Leucine amide.

The protein belongs to the glucagon family. In terms of assembly, interacts with ADCYAP1R1 (via N-terminal extracellular domain).

It localises to the secreted. In terms of biological role, PACAP is a neuropeptide involved in diverse array of physiological processes through activating the PACAP subfamily of class B1 G protein-coupled receptors: VIP receptor 1 (VIPR1), VIP receptor 2 (VIPR2), and PACAP type I receptor (ADCYAP1R1). Exerts neuroprotective and general cytoprotective effects due to anti-apoptotic, anti-inflammatory, and antioxidant actions. This is Pituitary adenylate cyclase-activating polypeptide (Adcyap1) from Heloderma suspectum (Gila monster).